A 231-amino-acid chain; its full sequence is Putative histone H1.9 (231 aa).

Residues 113–177 enclose the H15 domain; that stretch reads QKPSTSKVIL…GSAGSFTLGK (65 aa). S135 carries the phosphoserine modification. The segment at 177-214 is disordered; sequence KKQASKSKLKVKRQRQQRWRSGQRPFGQHRSLLGSKQG. The span at 179–194 shows a compositional bias: basic residues; it reads QASKSKLKVKRQRQQR.

The protein belongs to the histone H1/H5 family. In terms of tissue distribution, expressed exclusively in the testis.

The protein resides in the nucleus. Its subcellular location is the chromosome. Functionally, DNA-binding protein that may be implicated in chromatin remodeling and/or transcriptional regulation during spermiogenesis, the process of spermatid maturation into spermatozoa. The sequence is that of Putative histone H1.9 from Homo sapiens (Human).